A 513-amino-acid chain; its full sequence is MQLNPSEISDLIKTRIEGLKAGADAKNTGTVISVTDGICRIHGLSGVMQGEMLEFPGNTFGLALNLERDSVGAVVLGDYEHISEGNEVKCTGRILEVPVGPELLGRVVNALGQPIDGKGPINAKKTDVIEKVAPGVIARQSVSQPVQTGLKSIDAMVPIGRGQRELIIGDRQTGKTAVAVDAIINQKGKGIFCVYVAIGQKASTIANVVRKLEEHGALEYTIVVAAAASDSAAMQYLSAYAGCTMGEYFRDRGEDALIVYDDLTKQAWAYRQVSLLLRRPPGREAYPGDVFYLHSRLLERAARVNAEHIEKITNGEVKGKTGSLTALPVIETQAGDVSAFVPTNVISITDGQIFLETDLFNAGIRPAINAGISVSRVGGAAQTKVVKKLSGGIRTDLAQYRELAAFAQFASDLDEATRKQLERGRRVTELLKQPQYQPLQVWQLAASLYAANNGFLDNVDVKDILAFEKGLHDQLKTKYADLINRIEDTKDLSKDDEAALRAAIEDFKKSAAF.

169 to 176 lines the ATP pocket; that stretch reads GDRQTGKT.

It belongs to the ATPase alpha/beta chains family. In terms of assembly, F-type ATPases have 2 components, CF(1) - the catalytic core - and CF(0) - the membrane proton channel. CF(1) has five subunits: alpha(3), beta(3), gamma(1), delta(1), epsilon(1). CF(0) has three main subunits: a(1), b(2) and c(9-12). The alpha and beta chains form an alternating ring which encloses part of the gamma chain. CF(1) is attached to CF(0) by a central stalk formed by the gamma and epsilon chains, while a peripheral stalk is formed by the delta and b chains.

Its subcellular location is the cell inner membrane. The catalysed reaction is ATP + H2O + 4 H(+)(in) = ADP + phosphate + 5 H(+)(out). Its function is as follows. Produces ATP from ADP in the presence of a proton gradient across the membrane. The alpha chain is a regulatory subunit. The protein is ATP synthase subunit alpha of Ralstonia nicotianae (strain ATCC BAA-1114 / GMI1000) (Ralstonia solanacearum).